A 339-amino-acid chain; its full sequence is Nitrilase (339 aa).

The region spanning 7–277 (YRVAAVQASP…EGITYADIDL (271 aa)) is the CN hydrolase domain. The active-site Proton acceptor is the glutamate 47. Residue lysine 128 is the Proton donor of the active site. Cysteine 162 acts as the Nucleophile in catalysis.

It belongs to the carbon-nitrogen hydrolase superfamily. Nitrilase family.

The catalysed reaction is a nitrile + 2 H2O = a carboxylate + NH4(+). The protein is Nitrilase (nit) of Bacillus sp. (strain OxB-1).